The primary structure comprises 98 residues: NADH-ubiquinone oxidoreductase chain 4L (98 aa).

3 helical membrane passes run 1-21, 26-46, and 56-76; these read MSPLHFSFYSAFTFSSLGLAF, LISALLCLESMMLSMFIPLSI, and FALVPILMLAFSACEAGTGLA.

The protein belongs to the complex I subunit 4L family. As to quaternary structure, core subunit of respiratory chain NADH dehydrogenase (Complex I) which is composed of 45 different subunits.

The protein localises to the mitochondrion inner membrane. It carries out the reaction a ubiquinone + NADH + 5 H(+)(in) = a ubiquinol + NAD(+) + 4 H(+)(out). In terms of biological role, core subunit of the mitochondrial membrane respiratory chain NADH dehydrogenase (Complex I) which catalyzes electron transfer from NADH through the respiratory chain, using ubiquinone as an electron acceptor. Part of the enzyme membrane arm which is embedded in the lipid bilayer and involved in proton translocation. The sequence is that of NADH-ubiquinone oxidoreductase chain 4L (MT-ND4L) from Gallus gallus (Chicken).